Reading from the N-terminus, the 901-residue chain is HTH-type transcriptional regulator MalT (901 aa).

An ATP-binding site is contributed by 39–46 (SPAGYGKT). The 66-residue stretch at 829 to 894 (ELIRTSPLTQ…DAVQHAQQLL (66 aa)) folds into the HTH luxR-type domain. Positions 853–872 (NEQIAGELEVAATTIKTHIR) form a DNA-binding region, H-T-H motif.

It belongs to the MalT family. Monomer in solution. Oligomerizes to an active state in the presence of the positive effectors ATP and maltotriose.

With respect to regulation, activated by ATP and maltotriose, which are both required for DNA binding. Functionally, positively regulates the transcription of the maltose regulon whose gene products are responsible for uptake and catabolism of malto-oligosaccharides. Specifically binds to the promoter region of its target genes, recognizing a short DNA motif called the MalT box. This Escherichia coli (strain ATCC 8739 / DSM 1576 / NBRC 3972 / NCIMB 8545 / WDCM 00012 / Crooks) protein is HTH-type transcriptional regulator MalT.